The sequence spans 156 residues: Oxidized purine nucleoside triphosphate hydrolase (156 aa).

A Nudix hydrolase domain is found at 3–132 (TSRLYTLVLV…WFPLLLQKKK (130 aa)). Residue Thr-8 coordinates 2-oxo-dATP. Residues Thr-8, Lys-23, Asn-33, 35–38 (FGGK), and Glu-52 contribute to the 8-oxo-dGTP site. Residues Asn-33 and 35-38 (FGGK) contribute to the 2-oxo-dATP site. Gly-36, Glu-52, Glu-55, Glu-56, and Glu-100 together coordinate Mg(2+). The short motif at 37–58 (GKVQEGETIEDGAKRELLEESG) is the Nudix box element. Residues Glu-56, Glu-100, and 117 to 120 (WPDD) each bind 8-oxo-dGTP. 117–120 (WPDD) provides a ligand contact to 2-oxo-dATP.

The protein belongs to the Nudix hydrolase family. As to quaternary structure, monomer. Mg(2+) serves as cofactor. High expression levels detected in thymus, liver, spleen, kidney, testis and large intestine, with lower levels detected in brain, heart, lung and stomach (at protein level). Expressed in kidney, liver and small intestine.

Its subcellular location is the cytoplasm. It is found in the nucleus. The protein localises to the nucleus membrane. It localises to the cytoplasmic vesicle. The protein resides in the secretory vesicle. Its subcellular location is the acrosome. The enzyme catalyses 2-oxo-dATP + H2O = 2-oxo-dAMP + diphosphate + H(+). It catalyses the reaction 2-oxo-ATP + H2O = 2-oxo-AMP + diphosphate + H(+). The catalysed reaction is 8-oxo-dGTP + H2O = 8-oxo-dGMP + diphosphate + H(+). It carries out the reaction 8-oxo-dATP + H2O = 8-oxo-dAMP + diphosphate + H(+). The enzyme catalyses O(6)-methyl-dGTP + H2O = O(6)-methyl-dGMP + diphosphate + H(+). It catalyses the reaction N(6)-methyl-dATP + H2O = N(6)-methyl-dAMP + diphosphate + H(+). The catalysed reaction is N(6)-methyl-ATP + H2O = N(6)-methyl-AMP + diphosphate + H(+). In terms of biological role, oxidized purine nucleoside triphosphate hydrolase which is a prominent sanitizer of the oxidized nucleotide pool. Catalyzes the hydrolysis of 2-oxo-dATP (2-hydroxy-dATP) into 2-oxo-dAMP. Also has a significant hydrolase activity toward 2-oxo-ATP, 8-oxo-dGTP and 8-oxo-dATP. Through the hydrolysis of oxidized purine nucleoside triphosphates, prevents their incorporation into DNA and the subsequent transversions A:T to C:G and G:C to T:A. Also catalyzes the hydrolysis of methylated purine nucleoside triphosphate preventing their integration into DNA. Through this antimutagenic activity protects cells from oxidative stress. The sequence is that of Oxidized purine nucleoside triphosphate hydrolase (Nudt1) from Mus musculus (Mouse).